A 224-amino-acid polypeptide reads, in one-letter code: 4-aminobenzoate synthase (224 aa).

Glutamate 77, histidine 84, glutamate 138, histidine 169, aspartate 173, and histidine 176 together coordinate Fe(2+).

Belongs to the CADD family. As to quaternary structure, homodimer. It depends on Fe(2+) as a cofactor. Mn(2+) serves as cofactor.

Functionally, involved in de novo para-aminobenzoate (PABA) biosynthesis. Acts as a self-sacrificing or 'suicide' enzyme that utilizes its own active site tyrosine residue(s) as the substrate for PABA synthesis. The side chain of the tyrosine residue is released from the protein backbone via cleavage of the C(alpha)-C(beta) bond, leaving a glycine in place of the original tyrosine residue. Reaction requires O(2) and a reduced dimetal cofactor. This Chlamydia pneumoniae (Chlamydophila pneumoniae) protein is 4-aminobenzoate synthase.